We begin with the raw amino-acid sequence, 198 residues long: Protein GrpE (198 aa).

This sequence belongs to the GrpE family. Homodimer.

Its subcellular location is the cytoplasm. Functionally, participates actively in the response to hyperosmotic and heat shock by preventing the aggregation of stress-denatured proteins, in association with DnaK and GrpE. It is the nucleotide exchange factor for DnaK and may function as a thermosensor. Unfolded proteins bind initially to DnaJ; upon interaction with the DnaJ-bound protein, DnaK hydrolyzes its bound ATP, resulting in the formation of a stable complex. GrpE releases ADP from DnaK; ATP binding to DnaK triggers the release of the substrate protein, thus completing the reaction cycle. Several rounds of ATP-dependent interactions between DnaJ, DnaK and GrpE are required for fully efficient folding. The sequence is that of Protein GrpE from Actinobacillus pleuropneumoniae serotype 3 (strain JL03).